The sequence spans 305 residues: Phospho-N-acetylmuramoyl-pentapeptide-transferase (305 aa).

Helical transmembrane passes span M1–K21, A46–G66, E73–L93, F113–H133, L139–F159, I174–L194, V207–L227, L233–I253, and V282–G302.

It belongs to the glycosyltransferase 4 family. MraY subfamily. Mg(2+) is required as a cofactor.

It localises to the cell membrane. It carries out the reaction UDP-N-acetyl-alpha-D-muramoyl-L-alanyl-gamma-D-glutamyl-meso-2,6-diaminopimeloyl-D-alanyl-D-alanine + di-trans,octa-cis-undecaprenyl phosphate = di-trans,octa-cis-undecaprenyl diphospho-N-acetyl-alpha-D-muramoyl-L-alanyl-D-glutamyl-meso-2,6-diaminopimeloyl-D-alanyl-D-alanine + UMP. It participates in cell wall biogenesis; peptidoglycan biosynthesis. Its function is as follows. Catalyzes the initial step of the lipid cycle reactions in the biosynthesis of the cell wall peptidoglycan: transfers peptidoglycan precursor phospho-MurNAc-pentapeptide from UDP-MurNAc-pentapeptide onto the lipid carrier undecaprenyl phosphate, yielding undecaprenyl-pyrophosphoryl-MurNAc-pentapeptide, known as lipid I. The chain is Phospho-N-acetylmuramoyl-pentapeptide-transferase from Deinococcus deserti (strain DSM 17065 / CIP 109153 / LMG 22923 / VCD115).